A 247-amino-acid polypeptide reads, in one-letter code: Probable transcriptional regulatory protein Dvul_0986 (247 aa).

The segment at 1 to 22 (MAGHSKWANIQHRKGRQDAKRG) is disordered.

The protein belongs to the TACO1 family.

It is found in the cytoplasm. The polypeptide is Probable transcriptional regulatory protein Dvul_0986 (Nitratidesulfovibrio vulgaris (strain DP4) (Desulfovibrio vulgaris)).